Consider the following 95-residue polypeptide: Class I hydrophobin 13 (95 aa).

Intrachain disulfides connect Cys-14-Cys-74, Cys-21-Cys-68, Cys-22-Cys-55, and Cys-75-Cys-88. N-linked (GlcNAc...) asparagine glycosylation is found at Asn-23 and Asn-77.

The protein belongs to the fungal hydrophobin family. In terms of assembly, self-assembles to form functional amyloid fibrils called rodlets. Self-assembly into fibrillar rodlets occurs spontaneously at hydrophobic:hydrophilic interfaces and the rodlets further associate laterally to form amphipathic monolayers.

Its subcellular location is the secreted. The protein localises to the cell wall. Its function is as follows. Aerial growth, conidiation, and dispersal of filamentous fungi in the environment rely upon a capability of their secreting small amphipathic proteins called hydrophobins (HPBs) with low sequence identity. Class I can self-assemble into an outermost layer of rodlet bundles on aerial cell surfaces, conferring cellular hydrophobicity that supports fungal growth, development and dispersal; whereas Class II form highly ordered films at water-air interfaces through intermolecular interactions but contribute nothing to the rodlet structure. In Pleurotus ostreatus (strain PC15) (Oyster mushroom), this protein is Class I hydrophobin 13.